The primary structure comprises 453 residues: UDP-glycosyltransferase 74E2 (453 aa).

H17 (proton acceptor) is an active-site residue. Residue H17 participates in an anthocyanidin binding. The active-site Charge relay is D109. Residues T131, Q334, H349, W352, N353, S354, E357, D373, and Q374 each coordinate UDP-alpha-D-glucose.

Belongs to the UDP-glycosyltransferase family. Expressed in roots, cotyledons and leaf hydathodes.

It catalyses the reaction (indol-3-yl)butanoate + UDP-alpha-D-glucose = 4-(indol-3-yl)butanoyl-beta-D-glucose + UDP. Functionally, glucosyltransferase that acts on the auxin indole-3-butyric acid (IBA). Mediates abiotic stress responses and stress-induced morphological adaptations by regulating auxin homeostasis. Possesses low activity in vitro on jasmonate (JA) and the synthetic auxin analog naphthaleneacetic acid (NAA). The chain is UDP-glycosyltransferase 74E2 (UGT74E2) from Arabidopsis thaliana (Mouse-ear cress).